Reading from the N-terminus, the 466-residue chain is Heat stress transcription factor A-5 (466 aa).

A DNA-binding region spans residues 21-115 (PAPFLVKTYE…LLKNIHRRKP (95 aa)). The segment at 125-191 (SSTDQERAVL…KLLNFLETAI (67 aa)) is hydrophobic repeat HR-A/B. Residues 198 to 217 (KNFGKKVEQLDISAYNKKRR) carry the Bipartite nuclear localization signal motif. 3 disordered regions span residues 215-248 (KRRL…GNIF), 272-300 (HSIQ…LTKR), and 422-466 (TERP…QLTL). The span at 218 to 233 (LPEVEQSKPPSEDSHL) shows a compositional bias: basic and acidic residues. An AHA motif is present at residues 414–423 (DVFWEQFLTE). Polar residues-rich tracts occupy residues 425-438 (PGSS…STYR) and 455-466 (LRNTKNIEQLTL). The Nuclear export signal signature appears at 461-466 (IEQLTL).

The protein belongs to the HSF family. Class A subfamily. As to quaternary structure, homotrimer. Post-translationally, exhibits temperature-dependent phosphorylation.

The protein resides in the cytoplasm. It localises to the nucleus. Its function is as follows. Transcriptional activator that specifically binds DNA sequence 5'-AGAAnnTTCT-3' known as heat shock promoter elements (HSE). This chain is Heat stress transcription factor A-5 (HSFA5), found in Arabidopsis thaliana (Mouse-ear cress).